We begin with the raw amino-acid sequence, 691 residues long: DNA ligase (691 aa).

Residues 41–45, 90–91, and Glu130 contribute to the NAD(+) site; these read DAEYD and SL. Lys132 serves as the catalytic N6-AMP-lysine intermediate. NAD(+) contacts are provided by Arg153, Glu190, Lys307, and Lys331. Residues Cys425, Cys428, Cys443, and Cys449 each contribute to the Zn(2+) site. In terms of domain architecture, BRCT spans 610–691; sequence APQGVLAGKT…LHQLLEGNTQ (82 aa).

Belongs to the NAD-dependent DNA ligase family. LigA subfamily. Requires Mg(2+) as cofactor. The cofactor is Mn(2+).

The enzyme catalyses NAD(+) + (deoxyribonucleotide)n-3'-hydroxyl + 5'-phospho-(deoxyribonucleotide)m = (deoxyribonucleotide)n+m + AMP + beta-nicotinamide D-nucleotide.. Functionally, DNA ligase that catalyzes the formation of phosphodiester linkages between 5'-phosphoryl and 3'-hydroxyl groups in double-stranded DNA using NAD as a coenzyme and as the energy source for the reaction. It is essential for DNA replication and repair of damaged DNA. In Burkholderia vietnamiensis (strain G4 / LMG 22486) (Burkholderia cepacia (strain R1808)), this protein is DNA ligase.